The primary structure comprises 159 residues: Transmembrane protein 89 (159 aa).

Residues 1–24 form the signal peptide; it reads MLHVLASLPLLLLLVTSASTHAWS. The Extracellular segment spans residues 25-63; it reads RPLWYQVGLDLQPWGCQPKSVEGCRGGLSCPGYWLGPGA. The chain crosses the membrane as a helical span at residues 64–86; it reads SRIYPVAAVMITTTMLMICRKIL. The Cytoplasmic portion of the chain corresponds to 87–159; the sequence is QGRRRSQATK…QIKGTSTQSG (73 aa). Residues 91–110 form a disordered region; the sequence is RSQATKGEHPQVTTEPCGPW.

It is found in the membrane. The sequence is that of Transmembrane protein 89 (TMEM89) from Homo sapiens (Human).